Reading from the N-terminus, the 1171-residue chain is DNA-directed RNA polymerase subunit beta (1171 aa).

It belongs to the RNA polymerase beta chain family. The RNAP catalytic core consists of 2 alpha, 1 beta, 1 beta' and 1 omega subunit. When a sigma factor is associated with the core the holoenzyme is formed, which can initiate transcription.

The catalysed reaction is RNA(n) + a ribonucleoside 5'-triphosphate = RNA(n+1) + diphosphate. DNA-dependent RNA polymerase catalyzes the transcription of DNA into RNA using the four ribonucleoside triphosphates as substrates. In Corynebacterium efficiens (strain DSM 44549 / YS-314 / AJ 12310 / JCM 11189 / NBRC 100395), this protein is DNA-directed RNA polymerase subunit beta.